The primary structure comprises 209 residues: MEGVTIVDHPLVQHKLTLVRDKSISTKSFRELIKEIGMLLCYEVTRDLPLADTVIETPLATMHSAKIAGKKLVFVPMLRAGTTFVDGMMDLVPTARVAHIGLYREPHSFAAVEYFFKSPSDLGERLAIVVTPVVATANTAVAAIDRLKERGAKDIRLACLIAAPEGLERLRGLHPDVPIWTAAVDEGLDENGFILPGLGDAGDRAYGTR.

5-phospho-alpha-D-ribose 1-diphosphate-binding positions include Arg79, Arg104, and 131–139 (TPVVATANT). Residues Ile194 and 199-201 (GDA) each bind uracil. Asp200 is a 5-phospho-alpha-D-ribose 1-diphosphate binding site.

This sequence belongs to the UPRTase family. Mg(2+) serves as cofactor.

It catalyses the reaction UMP + diphosphate = 5-phospho-alpha-D-ribose 1-diphosphate + uracil. Its pathway is pyrimidine metabolism; UMP biosynthesis via salvage pathway; UMP from uracil: step 1/1. Its activity is regulated as follows. Allosterically activated by GTP. Catalyzes the conversion of uracil and 5-phospho-alpha-D-ribose 1-diphosphate (PRPP) to UMP and diphosphate. In Bradyrhizobium diazoefficiens (strain JCM 10833 / BCRC 13528 / IAM 13628 / NBRC 14792 / USDA 110), this protein is Uracil phosphoribosyltransferase.